A 365-amino-acid chain; its full sequence is tRNA (guanine(6)-N2)-methyltransferase (365 aa).

Positions 69–182 (NENSRLLHRV…KDVFFLGIDT (114 aa)) constitute a THUMP domain. S-adenosyl-L-methionine is bound by residues 198–202 (HPAHL), 228–230 (SGT), Glu-248, 276–277 (DA), and Asn-293.

It belongs to the methyltransferase superfamily. Monomer in solution.

Its subcellular location is the cytoplasm. It catalyses the reaction guanosine(6) in tRNA + S-adenosyl-L-methionine = N(2)-methylguanosine(6) in tRNA + S-adenosyl-L-homocysteine + H(+). S-adenosyl-L-methionine-dependent methyltransferase that catalyzes the methylation of the guanosine nucleotide at position 6 (m2G6) in tRNA(Phe). The chain is tRNA (guanine(6)-N2)-methyltransferase from Pyrococcus furiosus (strain ATCC 43587 / DSM 3638 / JCM 8422 / Vc1).